Consider the following 743-residue polypeptide: Tudor domain-containing protein 3 (743 aa).

A disordered region spans residues 241 to 262 (KTFGGGGGGARSNLNIGAAGHR). The UBA domain occupies 286–326 (LVDEKALKHITEMGFSKEASRQALMDNANNLEAALNVLLNS). Disordered stretches follow at residues 327–365 (SKQKPAVGPPARGRGKGRGRGRSEDEEDLGTARPSAPST) and 380–549 (EEPK…CYER). Residue Ser-349 is modified to Phosphoserine. Over residues 414 to 431 (PRNDTRQPRNERPPRFQK) the composition is skewed to basic and acidic residues. Over residues 432–445 (DTPTSKSTVENSVL) the composition is skewed to polar residues. Ser-438 is modified (phosphoserine). Composition is skewed to basic and acidic residues over residues 464–484 (AEERIKCDRPYSRYDRTKDAS) and 536–549 (RENQTGHPDHCYER). Lys-563 is covalently cross-linked (Glycyl lysine isopeptide (Lys-Gly) (interchain with G-Cter in SUMO2)). The interval 572-603 (TDYPRPVQSNSLGVPNGETAPPLKGRRVGPIK) is disordered. Residues 647–707 (VWKPGDECFA…KPVQTEAWEE (61 aa)) form the Tudor domain. Residues 711 to 725 (YDHTIEFRRGGDGQP) show a composition bias toward basic and acidic residues. The segment at 711 to 743 (YDHTIEFRRGGDGQPRRSTRPTQQFYQPPRARN) is disordered. The interval 723–743 (GQPRRSTRPTQQFYQPPRARN) is EBM motif; may mediate interaction with the EJC.

As to quaternary structure, component of mRNA stress granules. Interacts with FMR1, FXR1, FXR2, EWSR1, FUS, SERBP1, EEF1A1 and DDX3X or DDX3Y, and with the small nuclear ribonucleoprotein-associated proteins SNRPB and SNRPN. Interacts with 'Lys-48'-linked tetra-ubiquitin, but not with monoubiquitin or 'Lys-63'-linked ubiquitin chains. May interact with the exon junction complex (EJC) composed at least of CASC3, EIF4A3, MAGOH and RBM8A. Interacts with POLR2A (via the C-terminal domain (CTD)).

It is found in the cytoplasm. It localises to the nucleus. Functionally, scaffolding protein that specifically recognizes and binds dimethylarginine-containing proteins. Plays a role in the regulation of translation of target mRNAs by binding Arg/Gly-rich motifs (GAR) in dimethylarginine-containing proteins. In nucleus, acts as a coactivator: recognizes and binds asymmetric dimethylation on the core histone tails associated with transcriptional activation (H3R17me2a and H4R3me2a) and recruits proteins at these arginine-methylated loci. In cytoplasm, acts as an antiviral factor that participates in the assembly of stress granules together with G3BP1. The sequence is that of Tudor domain-containing protein 3 (Tdrd3) from Mus musculus (Mouse).